The sequence spans 217 residues: Ribonuclease T (217 aa).

The Exonuclease domain occupies 20 to 194 (VVIDIETAGF…YDTQQTANLF (175 aa)). D23, E25, H181, and D186 together coordinate Mg(2+). Catalysis depends on H181, which acts as the Proton donor/acceptor.

This sequence belongs to the RNase T family. Homodimer. It depends on Mg(2+) as a cofactor.

In terms of biological role, trims short 3' overhangs of a variety of RNA species, leaving a one or two nucleotide 3' overhang. Responsible for the end-turnover of tRNA: specifically removes the terminal AMP residue from uncharged tRNA (tRNA-C-C-A). Also appears to be involved in tRNA biosynthesis. This chain is Ribonuclease T, found in Buchnera aphidicola subsp. Baizongia pistaciae (strain Bp).